The primary structure comprises 131 residues: Putative pre-16S rRNA nuclease (131 aa).

The protein belongs to the YqgF nuclease family.

It is found in the cytoplasm. Could be a nuclease involved in processing of the 5'-end of pre-16S rRNA. This is Putative pre-16S rRNA nuclease from Bordetella avium (strain 197N).